The chain runs to 311 residues: Probable manganese-dependent inorganic pyrophosphatase (311 aa).

Mn(2+)-binding residues include His-9, Asp-13, Asp-15, Asp-75, His-97, and Asp-149.

It belongs to the PPase class C family. Mn(2+) is required as a cofactor.

It localises to the cytoplasm. It catalyses the reaction diphosphate + H2O = 2 phosphate + H(+). In Lactobacillus helveticus (strain DPC 4571), this protein is Probable manganese-dependent inorganic pyrophosphatase.